The following is a 209-amino-acid chain: Homeobox protein ceh-2 (209 aa).

Basic and acidic residues predominate over residues 1 to 14; the sequence is MTLKFSVERLVDSE. 2 disordered regions span residues 1 to 46 and 181 to 209; these read MTLK…KSGK and HKRV…KSVS. Residues 15 to 24 are compositionally biased toward acidic residues; it reads KESEEADVEE. The segment at residues 126–185 is a DNA-binding region (homeobox); that stretch reads NKRIRTAFSASQLIQLEKAFEGNHYVVGNERKQLAAKLSLTETQVKVWFQNRRTKHKRVR.

The protein belongs to the EMX homeobox family. In the anterior pharynx, expressed in the I3 interneuron, the NSM and M3 motor neuron pairs, the three m2 muscle cells and the three e2 epithelial cells (at protein level).

It localises to the nucleus. Its function is as follows. Required for activity of the M3 pharyngeal motor neuron. This Caenorhabditis elegans protein is Homeobox protein ceh-2.